The chain runs to 340 residues: Integral membrane protein SED5 (340 aa).

Residues 1 to 319 (MNIKDRTSEF…KYFDRIKSNR (319 aa)) lie on the Cytoplasmic side of the membrane. Residues 31–51 (RLQEKESENFANNTTGNGKSV) form a disordered region. A compositionally biased stretch (polar residues) spans 39–51 (NFANNTTGNGKSV). Residues 146-173 (LNTQMKNISGSFKDVLEERQRLEMANKD) are a coiled coil. Residues 180-231 (TDTGHAPADDQTQSNHAADLTTYNNSNPFMTSLLDESSEKNNNSSNQGELSF) are disordered. Positions 189–209 (DQTQSNHAADLTTYNNSNPFM) are enriched in polar residues. Residues 249 to 311 (NVYLQERNRA…SGAQRELLKY (63 aa)) form the t-SNARE coiled-coil homology domain. The helical; Anchor for type IV membrane protein transmembrane segment at 320-340 (WLAAKVFFIIFVFFVIWVLVN) threads the bilayer.

The protein belongs to the syntaxin family. As to quaternary structure, interacts with SLY1, STF1, SFB3 and GOS1.

Its subcellular location is the membrane. It is found in the golgi apparatus membrane. Its function is as follows. Required for vesicular transport between the endoplasmic reticulum and the Golgi complex. Acts as a target organelle soluble NSF attachment protein receptor (t-SNARE). The chain is Integral membrane protein SED5 (SED5) from Saccharomyces cerevisiae (strain ATCC 204508 / S288c) (Baker's yeast).